Consider the following 86-residue polypeptide: Large ribosomal subunit protein bL31 (86 aa).

A disordered region spans residues 65 to 86 (YRMASSDSSEQKDKSSEEKKES). Residues 73-86 (SEQKDKSSEEKKES) show a composition bias toward basic and acidic residues.

It belongs to the bacterial ribosomal protein bL31 family. Type A subfamily. As to quaternary structure, part of the 50S ribosomal subunit.

Binds the 23S rRNA. The polypeptide is Large ribosomal subunit protein bL31 (Prochlorococcus marinus (strain NATL1A)).